An 83-amino-acid polypeptide reads, in one-letter code: MTKGTTSMGQRHGRTHILCRRCGRNSYHVQWERCAACAYPRASRRRYNWSVKAIKRRRTGTGRCRYLKVVNRRIANHFKTPKA.

4 residues coordinate Zn(2+): Cys19, Cys22, Cys34, and Cys37. The C4-type zinc-finger motif lies at 19–37 (CRRCGRNSYHVQWERCAAC).

The protein belongs to the eukaryotic ribosomal protein eL37 family. Zn(2+) serves as cofactor.

Its function is as follows. Binds to the 23S rRNA. This Leishmania donovani protein is Large ribosomal subunit protein eL37 (RPL37).